Reading from the N-terminus, the 502-residue chain is Probable zinc metalloprotease MGG_02107 (502 aa).

Residues 1–21 (MRSPPGAVAALASVAAQLATA) form the signal peptide. Zn(2+) is bound by residues His182, Asp202, and Glu235. N-linked (GlcNAc...) asparagine glycosylation occurs at Asn250. Asp262 is a binding site for Zn(2+). The disordered stretch occupies residues 284 to 307 (QGGSPAGESKERAETRASIGGEND). N-linked (GlcNAc...) asparagine glycosylation is found at Asn375, Asn417, and Asn427. Residues 414 to 502 (QVRNVTVDTS…KSPATMPFPG (89 aa)) form the Fibronectin type-III domain.

It belongs to the peptidase M28 family. M28B subfamily. The cofactor is Zn(2+).

The protein localises to the secreted. The protein is Probable zinc metalloprotease MGG_02107 of Pyricularia oryzae (strain 70-15 / ATCC MYA-4617 / FGSC 8958) (Rice blast fungus).